The sequence spans 400 residues: PHD finger protein 24 (400 aa).

The N-myristoyl glycine moiety is linked to residue Gly2. The interval 30-108 (DRPSIRRTGE…FTPPAFIRPT (79 aa)) is disordered. An Omega-N-methylarginine modification is found at Arg36. A Phosphoserine modification is found at Ser43. Thr47 carries the post-translational modification Phosphothreonine. Position 51 is a phosphoserine (Ser51). The segment covering 78 to 97 (AWERLRDGRGVEPEEFDRTG) has biased composition (basic and acidic residues). Residues 129-190 (NDEMCDVCEV…TGWSCHYCDN (62 aa)) form a PHD-type zinc finger.

This Pongo abelii (Sumatran orangutan) protein is PHD finger protein 24.